We begin with the raw amino-acid sequence, 305 residues long: Putative glutamine--fructose-6-phosphate aminotransferase [isomerizing] (305 aa).

Residue cysteine 2 is the Nucleophile; for GATase activity of the active site. One can recognise a Glutamine amidotransferase type-2 domain in the interval 2 to 305 (CGIFGYCNFL…RLCITSAVCE (304 aa)).

It catalyses the reaction D-fructose 6-phosphate + L-glutamine = D-glucosamine 6-phosphate + L-glutamate. It functions in the pathway nucleotide-sugar biosynthesis; UDP-N-acetyl-alpha-D-glucosamine biosynthesis; alpha-D-glucosamine 6-phosphate from D-fructose 6-phosphate: step 1/1. Involved in amino sugar synthesis (formation of chitin, supplies the amino sugars of asparagine-linked oligosaccharides of glycoproteins). This chain is Putative glutamine--fructose-6-phosphate aminotransferase [isomerizing], found in Saccharomyces cerevisiae (strain Lalvin EC1118 / Prise de mousse) (Baker's yeast).